Reading from the N-terminus, the 218-residue chain is MSDTDDIPQLSADTLAALSMFQAEQQEKIEQLQSGIIEKIDEDWQLSQFWYDDETSRKLVAEGVAAALEGSEARPARIGCVSSPTLVKFFHETEEYKTGQIQLTLFEFDDRFGLKFPTEFVHYDYKHPTDLPAELLAKFDVIIADPPFLAAECLIKTAHSIRLLGKSDVKVLLCTGAIMEDYASRLMAMHRTSFEPRHANNLANDFSCFANYQTLTFC.

This sequence belongs to the class I-like SAM-binding methyltransferase superfamily. EFM5 family.

It localises to the cytoplasm. In terms of biological role, S-adenosyl-L-methionine-dependent protein-lysine N-methyltransferase that methylates elongation factor 1-alpha. In Caenorhabditis elegans, this protein is Protein-lysine N-methyltransferase M142.8.